The following is a 380-amino-acid chain: MAAQRDDEAGWSAEAARRVWGGAVPLQVHLHDADVTTLPPPPPFLTLGPRIGYLPLLVPIIKAHFSSTLPPGIDTVWFEYKGLPLKWYIPIGVLYDLLCADPERPWNLTVHFRGYPSEILTPCDGEDSVKWSYMNSLKEAAFIITGNSKNVMNMSQADQGALWQSVMKGNLDGYMNISTRLKLGPFEEDCLVRTSSVEGQQGSDEPESPGSGKPCRVPVRLYVRSVQEDLYDLEDALPVGDWESISYINRPFEVRREEGRSYITLEHALKTLLPEFFSSKASRIPDDSETAPQAPDSAPNDDSDVTPRSCEKLESSASSSPQEANVANKGKIVKLVRVQGIEVDMDIPFLWVANNLKNPECYLHICVYVGTRKREPKDGR.

Lys138 is covalently cross-linked (Glycyl lysine isopeptide (Lys-Gly) (interchain with G-Cter in ATG12)). The segment covering 194–203 (TSSVEGQQGS) has biased composition (polar residues). Disordered regions lie at residues 194–215 (TSSVEGQQGSDEPESPGSGKPC) and 283–309 (RIPDDSETAPQAPDSAPNDDSDVTPRS).

Belongs to the ATG5 family. In terms of assembly, conjugated to ATG12. Post-translationally, conjugated to ATG12; which is essential for autophagy.

Its subcellular location is the cytoplasm. Required for autophagy. Conjugation to ATG12 is essential for plant nutrient recycling. The chain is Autophagy protein 5 (ATG5) from Oryza sativa subsp. indica (Rice).